We begin with the raw amino-acid sequence, 383 residues long: Chitinase-3-like protein 1 (383 aa).

The N-terminal stretch at 1–21 (MGLRAAHTGFVVLVLLQSCAA) is a signal peptide. The GH18 domain maps to 22-383 (YKLICYYTSW…SAIKDVLARV (362 aa)). C26 and C51 are oxidised to a cystine. N-linked (GlcNAc...) asparagine glycosylation occurs at N60. Chitin-binding positions include 70–71 (EW), 97–100 (GGWN), Y141, 204–207 (LTYD), and R263. C300 and C364 form a disulfide bridge. The segment at 324–338 (QWVAYDDQESVKNKA) is important for AKT1 activation and IL8 production. W352 provides a ligand contact to chitin. N-linked (GlcNAc...) asparagine glycosylation is present at N367.

It belongs to the glycosyl hydrolase 18 family. As to quaternary structure, monomer. Glycosylated. Mammary secretions collected during the non-lactating period.

Its subcellular location is the secreted. The protein localises to the extracellular space. The protein resides in the cytoplasm. It localises to the perinuclear region. It is found in the endoplasmic reticulum. Carbohydrate-binding lectin with a preference for chitin. Has no chitinase activity. May play a role in tissue remodeling and in the capacity of cells to respond to and cope with changes in their environment. Plays a role in T-helper cell type 2 (Th2) inflammatory response and IL-13-induced inflammation, regulating allergen sensitization, inflammatory cell apoptosis, dendritic cell accumulation and M2 macrophage differentiation. Facilitates invasion of pathogenic enteric bacteria into colonic mucosa and lymphoid organs. Mediates activation of AKT1 signaling pathway and subsequent IL8 production in colonic epithelial cells. Regulates antibacterial responses in lung by contributing to macrophage bacterial killing, controlling bacterial dissemination and augmenting host tolerance. Also regulates hyperoxia-induced injury, inflammation and epithelial apoptosis in lung. This is Chitinase-3-like protein 1 (CHI3L1) from Bos taurus (Bovine).